The chain runs to 153 residues: Transcriptional repressor NrdR (153 aa).

Residues 3-34 (CPFCGKENTRVIDSRPADDCSSIRRRRQCDEC) fold into a zinc finger. The ATP-cone domain maps to 49-139 (LVVIKKDNNR…VYREFKDVNT (91 aa)).

It belongs to the NrdR family. Zn(2+) is required as a cofactor.

In terms of biological role, negatively regulates transcription of bacterial ribonucleotide reductase nrd genes and operons by binding to NrdR-boxes. This is Transcriptional repressor NrdR from Lachnoclostridium phytofermentans (strain ATCC 700394 / DSM 18823 / ISDg) (Clostridium phytofermentans).